The primary structure comprises 442 residues: 3-ketoacyl-CoA thiolase (442 aa).

Cysteine 105 (acyl-thioester intermediate) is an active-site residue. Catalysis depends on proton acceptor residues histidine 398 and cysteine 428.

It belongs to the thiolase-like superfamily. Thiolase family. In terms of assembly, heterotetramer of two alpha chains (FadJ) and two beta chains (FadI).

The protein resides in the cytoplasm. It catalyses the reaction an acyl-CoA + acetyl-CoA = a 3-oxoacyl-CoA + CoA. The protein operates within lipid metabolism; fatty acid beta-oxidation. In terms of biological role, catalyzes the final step of fatty acid oxidation in which acetyl-CoA is released and the CoA ester of a fatty acid two carbons shorter is formed. The chain is 3-ketoacyl-CoA thiolase from Aliivibrio fischeri (strain ATCC 700601 / ES114) (Vibrio fischeri).